The primary structure comprises 561 residues: Cytochrome P450 monooxygenase avaL (561 aa).

Residues Ile-19–Leu-39 traverse the membrane as a helical segment. Cys-508 is a binding site for heme.

It belongs to the cytochrome P450 family. Heme is required as a cofactor.

It is found in the membrane. It functions in the pathway secondary metabolite biosynthesis. Functionally, cytochrome P450 monooxygenase; part of the cluster that mediates the biosynthesis of a highly modified cyclo-arginine-tryptophan dipeptide (cRW). The first step of the pathway is perfornmed by the arginine-containing cyclodipeptide synthase (RCPDS) avaA that acts as the scaffold-generating enzyme and is responsible for formation of the cyclo-Arg-Trp (cRW) diketopiperazine. AvaB then acts as a multifunctional flavoenzyme that is responsible for generating the cyclo-Arg-formylkynurenine DKP, which can be deformylated by avaC. AvaB then further catalyzes an additional N-oxidation followed by cyclization and dehydration. The next step is an N-acetylation of the guanidine group catalyzed by the arginine N-acetyltransferase avaD. The roles of the additional enzymes identified within the ava cluster still have to be determined. The polypeptide is Cytochrome P450 monooxygenase avaL (Aspergillus versicolor).